A 281-amino-acid polypeptide reads, in one-letter code: NADPH-dependent 7-cyano-7-deazaguanine reductase (281 aa).

Residue 81–83 (VES) coordinates substrate. 83–84 (SK) contacts NADPH. C188 functions as the Thioimide intermediate in the catalytic mechanism. The active-site Proton donor is D195. 227–228 (HE) serves as a coordination point for substrate. 256–257 (RG) contributes to the NADPH binding site. The interval 261–281 (INPLRTSHPQGLPRNMRTARQ) is disordered.

It belongs to the GTP cyclohydrolase I family. QueF type 2 subfamily. As to quaternary structure, homodimer.

It localises to the cytoplasm. It carries out the reaction 7-aminomethyl-7-carbaguanine + 2 NADP(+) = 7-cyano-7-deazaguanine + 2 NADPH + 3 H(+). It participates in tRNA modification; tRNA-queuosine biosynthesis. In terms of biological role, catalyzes the NADPH-dependent reduction of 7-cyano-7-deazaguanine (preQ0) to 7-aminomethyl-7-deazaguanine (preQ1). The polypeptide is NADPH-dependent 7-cyano-7-deazaguanine reductase (Verminephrobacter eiseniae (strain EF01-2)).